We begin with the raw amino-acid sequence, 177 residues long: Large ribosomal subunit protein uL6 (177 aa).

The protein belongs to the universal ribosomal protein uL6 family. In terms of assembly, part of the 50S ribosomal subunit.

In terms of biological role, this protein binds to the 23S rRNA, and is important in its secondary structure. It is located near the subunit interface in the base of the L7/L12 stalk, and near the tRNA binding site of the peptidyltransferase center. The protein is Large ribosomal subunit protein uL6 of Methylorubrum populi (strain ATCC BAA-705 / NCIMB 13946 / BJ001) (Methylobacterium populi).